The following is a 117-amino-acid chain: Fluoride-specific ion channel FluC 2 (117 aa).

Helical transmembrane passes span 1 to 21 (MISIILVMIGGGFGAIARSAI) and 46 to 66 (FLIGLTIGLSISISWFPAFFV). Na(+) is bound by residues G71 and T74. Residues 95–115 (LFLNYSLLQFIIGFIACYIGY) traverse the membrane as a helical segment.

Belongs to the fluoride channel Fluc/FEX (TC 1.A.43) family.

The protein localises to the cell membrane. The catalysed reaction is fluoride(in) = fluoride(out). With respect to regulation, na(+) is not transported, but it plays an essential structural role and its presence is essential for fluoride channel function. In terms of biological role, fluoride-specific ion channel. Important for reducing fluoride concentration in the cell, thus reducing its toxicity. The protein is Fluoride-specific ion channel FluC 2 of Staphylococcus aureus (strain NCTC 8325 / PS 47).